Consider the following 85-residue polypeptide: U4-theraphotoxin-Hhn1r (85 aa).

The first 22 residues, 1–22 (MKVTLIAILTCAAVLVLHTTAA), serve as a signal peptide directing secretion. A propeptide spanning residues 23 to 48 (EELEAESQLMEVGMPDTELAAVDEER) is cleaved from the precursor. 3 disulfide bridges follow: Cys-52–Cys-66, Cys-56–Cys-77, and Cys-71–Cys-82.

It belongs to the neurotoxin 12 (Hwtx-2) family. 02 (Hwtx-2) subfamily. Expressed by the venom gland.

The protein resides in the secreted. In terms of biological role, postsynaptic neurotoxin. This Cyriopagopus hainanus (Chinese bird spider) protein is U4-theraphotoxin-Hhn1r.